The following is a 1571-amino-acid chain: Phospholipid-transporting ATPase DNF1 (1571 aa).

A disordered region spans residues 1 to 94 (MSGTFHGDGH…TPKLNNGSGT (94 aa)). Topologically, residues 1 to 214 (MSGTFHGDGH…TFLPKNILFQ (214 aa)) are cytoplasmic. A compositionally biased stretch (basic and acidic residues) spans 29-40 (EDTHIAPTHFDD). Positions 42–56 (ATSNKYSRPQVSFND) are enriched in polar residues. Phosphoserine is present on S53. The segment covering 66–76 (AEEFTFNDDTE) has biased composition (acidic residues). T70 carries the phosphothreonine modification. Positions 80 to 93 (HSFQPTPKLNNGSG) are enriched in polar residues. The residue at position 81 (S81) is a Phosphoserine. Residue T85 is modified to Phosphothreonine. At S92 the chain carries Phosphoserine. A Phosphothreonine modification is found at T94. A Phosphoserine modification is found at S104. T109 carries the phosphothreonine modification. A helical transmembrane segment spans residues 215 to 235 (FHNFANVYFLVLIILGAFQIF). Residues 234-241 (IFGVTNPG) form an involved in phosphatidylcholine substrate selection region. Topologically, residues 236–239 (GVTN) are extracellular. The helical transmembrane segment at 240–260 (PGLSAVPLVVIVIITAIKDAI) threads the bilayer. Residues 261 to 553 (EDSRRTVLDL…RISRELNFSV (293 aa)) are Cytoplasmic-facing. Phosphoserine is present on residues S351, S354, S358, and S365. Y368 carries the post-translational modification Phosphotyrosine. The chain crosses the membrane as a helical span at residues 554–574 (VINFVLLFILCFVSGIANGVY). At 575–594 (YDKKGRSRFSYEFGTIAGSA) the chain is on the extracellular side. The interval 586 to 590 (EFGTI) is involved in phosphatidylcholine substrate selection. Residues 595–615 (ATNGFVSFWVAVILYQSLVPI) form a helical membrane-spanning segment. Topologically, residues 616–1188 (SLYISVEIIK…WSYKRLAEMI (573 aa)) are cytoplasmic. D667 (4-aspartylphosphate intermediate) is an active-site residue. Residues D667, K668, T669, E801, F842, S844, K847, and K871 each contribute to the ATP site. A Mg(2+)-binding site is contributed by D667. T669 contributes to the Mg(2+) binding site. Residue K895 forms a Glycyl lysine isopeptide (Lys-Gly) (interchain with G-Cter in ubiquitin) linkage. Positions 909, 910, 989, 990, 991, 1104, and 1110 each coordinate ATP. D1130 contributes to the Mg(2+) binding site. ATP contacts are provided by N1133 and D1134. D1134 is a Mg(2+) binding site. Residues 1189–1209 (PEFFYKNMIFALALFWYGIYN) form a helical membrane-spanning segment. At 1210–1219 (DFDGSYLYEY) the chain is on the extracellular side. A helical transmembrane segment spans residues 1220 to 1240 (TYMMFYNLAFTSLPVIFLGIL). Residues 1241-1270 (DQDVNDTISLVVPQLYRVGILRKEWNQRKF) are Cytoplasmic-facing. Residues 1271–1291 (LWYMLDGLYQSIICFFFPYLV) traverse the membrane as a helical segment. The Extracellular segment spans residues 1292–1307 (YHKNMIVTSNGLGLDH). Residues 1308-1328 (RYFVGVYVTTIAVISCNTYVL) form a helical membrane-spanning segment. The Cytoplasmic segment spans residues 1329 to 1334 (LHQYRW). Residues 1335–1355 (DWFSGLFIALSCLVVFAWTGI) form a helical membrane-spanning segment. Residues 1356–1375 (WSSAIASREFFKAAARIYGA) are Extracellular-facing. A helical membrane pass occupies residues 1376–1396 (PSFWAVFFVAVLFCLLPRFTY). An a 1,2-diacyl-sn-glycero-3-phospho-L-serine-binding site is contributed by R1393. The Cytoplasmic segment spans residues 1397–1571 (DSFQKFFYPT…ASLIGTQQNN (175 aa)). A Phosphoserine modification is found at S1506. Phosphothreonine is present on T1551. Residues S1552 and S1563 each carry the phosphoserine modification.

The protein belongs to the cation transport ATPase (P-type) (TC 3.A.3) family. Type IV subfamily. As to quaternary structure, component of a flippase complex consisting of DNF1 and LEM3. Interacts with LEM3; the interaction is direct and required for their mutual export from the endoplasmic reticulum. Mg(2+) serves as cofactor. Post-translationally, phosphorylated by FPK1 and KIN82.

It localises to the cell membrane. Its subcellular location is the endosome membrane. The protein localises to the golgi apparatus. It is found in the trans-Golgi network membrane. The protein resides in the cell septum. It localises to the bud. The enzyme catalyses ATP + H2O + phospholipidSide 1 = ADP + phosphate + phospholipidSide 2.. It carries out the reaction a 1,2-diacyl-sn-glycero-3-phosphoethanolamine(out) + ATP + H2O = a 1,2-diacyl-sn-glycero-3-phosphoethanolamine(in) + ADP + phosphate + H(+). It catalyses the reaction a 1,2-diacyl-sn-glycero-3-phosphocholine(out) + ATP + H2O = a 1,2-diacyl-sn-glycero-3-phosphocholine(in) + ADP + phosphate + H(+). The catalysed reaction is a beta-D-glucosyl-(1&lt;-&gt;1')-N-acylsphing-4-enine(out) + ATP + H2O = a beta-D-glucosyl-(1&lt;-&gt;1')-N-acylsphing-4-enine(in) + ADP + phosphate + H(+). The enzyme catalyses a 1,2-diacyl-sn-glycero-3-phospho-L-serine(out) + ATP + H2O = a 1,2-diacyl-sn-glycero-3-phospho-L-serine(in) + ADP + phosphate + H(+). Its function is as follows. Catalytic component of a P4-ATPase flippase complex which catalyzes the hydrolysis of ATP coupled to the transport of glucosylceramide, phosphatidylcholine, phosphatidylethanolamine, and small amounts of phosphatidylserine from the lumenal to the cytosolic leaflet of the cell membrane and ensures the maintenance of asymmetric distribution of phospholipids. Does not appear to transport sphingomyelin, inositol phosphoceramide, or phosphatidic acid. Required for efficient endocytosis. The chain is Phospholipid-transporting ATPase DNF1 from Saccharomyces cerevisiae (strain ATCC 204508 / S288c) (Baker's yeast).